The sequence spans 278 residues: Elongation factor Ts (278 aa).

The segment at 82–85 (TDFV) is involved in Mg(2+) ion dislocation from EF-Tu.

This sequence belongs to the EF-Ts family.

It is found in the cytoplasm. In terms of biological role, associates with the EF-Tu.GDP complex and induces the exchange of GDP to GTP. It remains bound to the aminoacyl-tRNA.EF-Tu.GTP complex up to the GTP hydrolysis stage on the ribosome. In Streptomyces coelicolor (strain ATCC BAA-471 / A3(2) / M145), this protein is Elongation factor Ts (tsf).